Consider the following 357-residue polypeptide: Heat-inducible transcription repressor HrcA (357 aa).

This sequence belongs to the HrcA family.

Negative regulator of class I heat shock genes (grpE-dnaK-dnaJ and groELS operons). Prevents heat-shock induction of these operons. The sequence is that of Heat-inducible transcription repressor HrcA from Chlorobium luteolum (strain DSM 273 / BCRC 81028 / 2530) (Pelodictyon luteolum).